The following is a 340-amino-acid chain: Protein LSM14 homolog car-1 (340 aa).

In terms of domain architecture, Sm spans 1-81; the sequence is MSNQTPYIGS…IKDLIVCDTP (81 aa). Residues 101–125 show a composition bias toward low complexity; it reads SRSAPASDGAPAASAGSSRAGTPSR. The interval 101-148 is disordered; it reads SRSAPASDGAPAASAGSSRAGTPSRNSPLGQIIQNQRPGRGGYQQNFQ. Over residues 126–148 the composition is skewed to polar residues; the sequence is NSPLGQIIQNQRPGRGGYQQNFQ. One can recognise a DFDF domain in the interval 178–214; that stretch reads VNHREKLKFESDFDFEKANEKFQEVLVDNLEKLNIED. Positions 227-243 match the FFD box motif; that stretch reads AFYDKKTSFFDNISCES. A TFG box motif is present at residues 251 to 271; that stretch reads TGRPDWKKERETNQETFGHNA. A disordered region spans residues 277–340; that stretch reads YRRGFGGRGR…QGNTAAAAEQ (64 aa). A compositionally biased stretch (gly residues) spans 280–296; it reads GFGGRGRGGNRGYGGYN. Low complexity predominate over residues 312–325; the sequence is GYRQNNGGYRRGGY.

This sequence belongs to the LSM14 family.

The protein localises to the nucleus. Functionally, transcriptional regulator. Involved in modulating embryonic expression of ATP-dependent chaperone cdc-48.1. May play a role in mRNA gene silencing, and RNA granule (P-body) assembly. The protein is Protein LSM14 homolog car-1 of Caenorhabditis elegans.